We begin with the raw amino-acid sequence, 242 residues long: Eukaryotic translation initiation factor 4E type 1B (242 aa).

The interval 1–42 (MLAVEVSEAEGGIREWEEEEKEEEAAERTPTGEKSPNSPRTL) is disordered. Residues 16–25 (WEEEEKEEEA) show a composition bias toward acidic residues. The span at 32-41 (GEKSPNSPRT) shows a compositional bias: polar residues. The interval 62–65 (HPLQ) is EIF4EBP1/2/3 binding. MRNA is bound at residue 81–82 (WQ). The tract at residues 98-102 (WALYS) is EIF4EBP1/2/3 binding. 127 to 128 (WE) contacts mRNA. The EIF4EBP1/2/3 binding stretch occupies residues 157–164 (ETLLCLIG). MRNA contacts are provided by residues 182 to 187 (RTKGDK) and 230 to 232 (TKS).

It belongs to the eukaryotic initiation factor 4E family. EIF4F is a multi-subunit complex, the composition of which varies with external and internal environmental conditions. It is composed of at least EIF4A, EIF4E and EIF4G.

Its function is as follows. Recognizes and binds the 7-methylguanosine-containing mRNA cap during an early step in the initiation of protein synthesis and facilitates ribosome binding by inducing the unwinding of the mRNAs secondary structure. The chain is Eukaryotic translation initiation factor 4E type 1B (EIF4E1B) from Homo sapiens (Human).